The chain runs to 715 residues: Protein DENND6 homolog (715 aa).

The stretch at 13–58 forms a coiled coil; the sequence is MIFKEEEIKKQQILLEKEEKEKQEQQQKKLNKDNIFKLEEEGKKLE. The 178-residue stretch at 96–273 folds into the uDENN domain; the sequence is NSFCIINFDL…VKQHQLGGGS (178 aa). Disordered regions lie at residues 269-296 and 392-416; these read LGGGSGGGLSSSPSSSSGGGNIPTSNTT and SGTRPDDSNNNNNQDDSEYNNNNNN. The cDENN domain occupies 299-476; that stretch reads SPSIWSEMKL…KDLLTRHVLD (178 aa). Residues 399–416 show a composition bias toward low complexity; it reads SNNNNNQDDSEYNNNNNN. The region spanning 478 to 600 is the dDENN domain; it reads KEKILSEYKP…KQWLDDKRAQ (123 aa).

The protein belongs to the DENND6 family.

This Dictyostelium discoideum (Social amoeba) protein is Protein DENND6 homolog.